Here is a 354-residue protein sequence, read N- to C-terminus: Peptide chain release factor 1 (354 aa).

Glutamine 230 is modified (N5-methylglutamine).

It belongs to the prokaryotic/mitochondrial release factor family. Post-translationally, methylated by PrmC. Methylation increases the termination efficiency of RF1.

The protein localises to the cytoplasm. Its function is as follows. Peptide chain release factor 1 directs the termination of translation in response to the peptide chain termination codons UAG and UAA. In Novosphingobium aromaticivorans (strain ATCC 700278 / DSM 12444 / CCUG 56034 / CIP 105152 / NBRC 16084 / F199), this protein is Peptide chain release factor 1.